Consider the following 399-residue polypeptide: Aromatic-amino-acid aminotransferase (399 aa).

Substrate is bound by residues glycine 36, tyrosine 67, tryptophan 132, and asparagine 184. Position 247 is an N6-(pyridoxal phosphate)lysine (lysine 247). Arginine 375 contributes to the substrate binding site.

This sequence belongs to the class-I pyridoxal-phosphate-dependent aminotransferase family. As to quaternary structure, homodimer. The cofactor is pyridoxal 5'-phosphate.

It is found in the cytoplasm. It carries out the reaction an aromatic L-alpha-amino acid + 2-oxoglutarate = an aromatic oxo-acid + L-glutamate. This Pseudomonas aeruginosa (strain ATCC 15692 / DSM 22644 / CIP 104116 / JCM 14847 / LMG 12228 / 1C / PRS 101 / PAO1) protein is Aromatic-amino-acid aminotransferase (phhC).